The following is a 346-amino-acid chain: N-acetyl-gamma-glutamyl-phosphate reductase (346 aa).

The active site involves C149.

It belongs to the NAGSA dehydrogenase family. Type 1 subfamily.

The protein localises to the cytoplasm. It catalyses the reaction N-acetyl-L-glutamate 5-semialdehyde + phosphate + NADP(+) = N-acetyl-L-glutamyl 5-phosphate + NADPH + H(+). Its pathway is amino-acid biosynthesis; L-arginine biosynthesis; N(2)-acetyl-L-ornithine from L-glutamate: step 3/4. In terms of biological role, catalyzes the NADPH-dependent reduction of N-acetyl-5-glutamyl phosphate to yield N-acetyl-L-glutamate 5-semialdehyde. The sequence is that of N-acetyl-gamma-glutamyl-phosphate reductase from Pelobacter propionicus (strain DSM 2379 / NBRC 103807 / OttBd1).